Here is a 178-residue protein sequence, read N- to C-terminus: MSGGKYVDSEGHLYTVPIREQGNIYKPNNKAMADELSEKQVYDAHTKEIDLVNRDPKHLNDDVVKIDFEDVIAEPEGTHSFDGIWKASFTTFTVTKYWFYRLLSALFGIPMALVWGIYFAILSFLHIWAVVPCIKSFLIEIQCISRVYSIYVHTVCDPLFEAVGKIFSNVRINLQKEI.

Serine 2 carries the post-translational modification N-acetylserine. The residue at position 2 (serine 2) is a Phosphoserine. Residues 2–94 (SGGKYVDSEG…WKASFTTFTV (93 aa)) form a required for homooligomerization region. Residues 2–104 (SGGKYVDSEG…TKYWFYRLLS (103 aa)) lie on the Cytoplasmic side of the membrane. Lysine 5 bears the N6-acetyllysine; alternate mark. Lysine 5 is covalently cross-linked (Glycyl lysine isopeptide (Lys-Gly) (interchain with G-Cter in ubiquitin); alternate). Tyrosine 6 carries the post-translational modification Phosphotyrosine. Serine 9 bears the Phosphoserine mark. Tyrosine 14 bears the Phosphotyrosine; by ABL1 mark. The residue at position 25 (tyrosine 25) is a Phosphotyrosine. Glycyl lysine isopeptide (Lys-Gly) (interchain with G-Cter in ubiquitin) cross-links involve residues lysine 26 and lysine 30. Serine 37 is modified (phosphoserine). Glycyl lysine isopeptide (Lys-Gly) (interchain with G-Cter in ubiquitin) cross-links involve residues lysine 39, lysine 47, and lysine 57. The tract at residues 82 to 94 (DGIWKASFTTFTV) is interaction with CAVIN3. An intramembrane region (helical) is located at residues 105-125 (ALFGIPMALVWGIYFAILSFL). The Cytoplasmic portion of the chain corresponds to 126 to 178 (HIWAVVPCIKSFLIEIQCISRVYSIYVHTVCDPLFEAVGKIFSNVRINLQKEI). An interacts with SPRY1, SPRY2, SPRY3 and SPRY4 region spans residues 131-142 (VPCIKSFLIEIQ). Residues cysteine 133, cysteine 143, and cysteine 156 are each lipidated (S-palmitoyl cysteine). An interacts with SPRY1, SPRY2, and SPRY4 region spans residues 149–160 (SIYVHTVCDPLF). The interval 167-178 (FSNVRINLQKEI) is interacts with SPRY1, SPRY2, SPRY3 and SPRY4.

The protein belongs to the caveolin family. In terms of assembly, homooligomer. Interacts with GLIPR2. Interacts with NOSTRIN. Interacts with SNAP25 and STX1A. Interacts (via the N-terminus) with DPP4; the interaction is direct. Interacts with CTNNB1, CDH1 and JUP. Interacts with PACSIN2; this interaction induces membrane tubulation. Interacts with SLC7A9. Interacts with BMX and BTK. Interacts with TGFBR1. Interacts with CAVIN3 (via leucine-zipper domain) in a cholesterol-sensitive manner. Interacts with CAVIN1. Interacts with EHD2 in a cholesterol-dependent manner. Forms a ternary complex with UBXN6 and VCP; mediates CAV1 targeting to lysosomes for degradation. Interacts with ABCG1; this interaction regulates ABCG1-mediated cholesterol efflux. Interacts with NEU3; this interaction enhances NEU3 sialidase activity within caveola. Interacts (via C-terminus) with SPRY1, SPRY2 (via C-terminus), SPRY3, and SPRY4. Interacts with IGFBP5; this interaction allows trafficking of IGFBP5 from the plasma membrane to the nucleus. Phosphorylated at Tyr-14 by ABL1 in response to oxidative stress. In terms of processing, ubiquitinated. Undergo monoubiquitination and multi- and/or polyubiquitination. Monoubiquitination of N-terminal lysines promotes integration in a ternary complex with UBXN6 and VCP which promotes oligomeric CAV1 targeting to lysosomes for degradation. Ubiquitinated by ZNRF1; leading to degradation and modulation of the TLR4-mediated immune response.

The protein resides in the golgi apparatus membrane. It localises to the cell membrane. Its subcellular location is the membrane. The protein localises to the caveola. It is found in the membrane raft. Its function is as follows. May act as a scaffolding protein within caveolar membranes. Forms a stable heterooligomeric complex with CAV2 that targets to lipid rafts and drives caveolae formation. Mediates the recruitment of CAVIN proteins (CAVIN1/2/3/4) to the caveolae. Interacts directly with G-protein alpha subunits and can functionally regulate their activity. Involved in the costimulatory signal essential for T-cell receptor (TCR)-mediated T-cell activation. Its binding to DPP4 induces T-cell proliferation and NF-kappa-B activation in a T-cell receptor/CD3-dependent manner. Recruits CTNNB1 to caveolar membranes and may regulate CTNNB1-mediated signaling through the Wnt pathway. Negatively regulates TGFB1-mediated activation of SMAD2/3 by mediating the internalization of TGFBR1 from membrane rafts leading to its subsequent degradation. Binds 20(S)-hydroxycholesterol (20(S)-OHC). The sequence is that of Caveolin-1 (CAV1) from Papio anubis (Olive baboon).